Here is a 92-residue protein sequence, read N- to C-terminus: MKILLAIALMLSTVMWVSTQQPQRVHTYCGRHLARTLADLCWEAGVDKRSGAQFASYGSAWLMPYSEGRGKRGIVDECCLRPCSVDVLLSYC.

Residues 1–19 (MKILLAIALMLSTVMWVST) form the signal peptide. At Gln-20 the chain carries Pyrrolidone carboxylic acid. 3 disulfides stabilise this stretch: Cys-29/Cys-79, Cys-41/Cys-92, and Cys-78/Cys-83. Positions 50-70 (SGAQFASYGSAWLMPYSEGRG) are cleaved as a propeptide — c peptide like.

It belongs to the insulin family. As to quaternary structure, heterodimer of a B chain and an A chain linked by two disulfide bonds.

The protein localises to the secreted. Its function is as follows. Brain peptide responsible for activation of prothoracic glands to produce ecdysone in insects. The chain is Bombyxin A-1 (BBXA1) from Bombyx mori (Silk moth).